The primary structure comprises 343 residues: N-acetyl-gamma-glutamyl-phosphate reductase (343 aa).

Residue Cys147 is part of the active site.

This sequence belongs to the NAGSA dehydrogenase family. Type 1 subfamily.

It localises to the cytoplasm. The enzyme catalyses N-acetyl-L-glutamate 5-semialdehyde + phosphate + NADP(+) = N-acetyl-L-glutamyl 5-phosphate + NADPH + H(+). The protein operates within amino-acid biosynthesis; L-arginine biosynthesis; N(2)-acetyl-L-ornithine from L-glutamate: step 3/4. In terms of biological role, catalyzes the NADPH-dependent reduction of N-acetyl-5-glutamyl phosphate to yield N-acetyl-L-glutamate 5-semialdehyde. The sequence is that of N-acetyl-gamma-glutamyl-phosphate reductase from Listeria monocytogenes serotype 4b (strain F2365).